A 68-amino-acid polypeptide reads, in one-letter code: Potassium channel toxin epsilon-KTx 1.2 (68 aa).

A signal peptide spans 1–26 (MKFSCGFLLIFLVLSAMIATFSEVEA). Intrachain disulfides connect C30–C38, C33–C54, C37–C47, and C42–C52. Y55 is modified (tyrosine amide). The propeptide occupies 57–68 (RSDLNEEFENYQ).

It belongs to the short scorpion toxin superfamily. Potassium channel inhibitor family. Epsilon-KTx 01 subfamily. As to expression, expressed by the venom gland.

The protein resides in the secreted. Its function is as follows. Potassium channel blocker. At 3 uM, this toxin blocks voltage-gated potassium channels rKv1.2/KCNA2 (5%), hKv1.3/KCNA3 (10%),rKv1.4/KCNA4 (20%), Kv11/hERG (24%), and Shaker-IR (27%). The polypeptide is Potassium channel toxin epsilon-KTx 1.2 (Tityus serrulatus (Brazilian scorpion)).